The chain runs to 713 residues: Polyribonucleotide nucleotidyltransferase (713 aa).

Mg(2+) is bound by residues Asp494 and Asp500. A KH domain is found at Pro561 to Val623. Residues Gly633 to Lys702 enclose the S1 motif domain.

Belongs to the polyribonucleotide nucleotidyltransferase family. Requires Mg(2+) as cofactor.

The protein localises to the cytoplasm. The catalysed reaction is RNA(n+1) + phosphate = RNA(n) + a ribonucleoside 5'-diphosphate. Involved in mRNA degradation. Catalyzes the phosphorolysis of single-stranded polyribonucleotides processively in the 3'- to 5'-direction. This is Polyribonucleotide nucleotidyltransferase from Amoebophilus asiaticus (strain 5a2).